A 293-amino-acid chain; its full sequence is Methylsterol monooxygenase 1 (293 aa).

A run of 2 helical transmembrane segments spans residues 55 to 75 and 100 to 120; these read LIVH…FQFI and VLLF…YYFT. One can recognise a Fatty acid hydroxylase domain in the interval 145-274; the sequence is CAVIEDTWHY…FTWWDRIFGT (130 aa). The short motif at 157–161 is the Histidine box-1 element; it reads HRLLH. A Histidine box-2 motif is present at residues 170 to 174; it reads HKVHH. A helical transmembrane segment spans residues 199–219; it reads FFIGIVLLCDHVILLWAWVTI. The short motif at 249-255 is the Histidine box-3 element; the sequence is HHDFHHM.

Belongs to the sterol desaturase family. It depends on Fe cation as a cofactor. In terms of processing, ubiquitinated by MARCHF6, leading to proteasomal degradation.

It is found in the endoplasmic reticulum membrane. It carries out the reaction 4,4-dimethyl-5alpha-cholest-7-en-3beta-ol + 6 Fe(II)-[cytochrome b5] + 3 O2 + 5 H(+) = 4alpha-carboxy-4beta-methyl-5alpha-cholest-7-ene-3beta-ol + 6 Fe(III)-[cytochrome b5] + 4 H2O. The catalysed reaction is 4,4-dimethyl-5alpha-cholesta-8,24-dien-3beta-ol + 6 Fe(II)-[cytochrome b5] + 3 O2 + 5 H(+) = 4beta-methylzymosterol-4alpha-carboxylate + 6 Fe(III)-[cytochrome b5] + 4 H2O. It catalyses the reaction 4alpha-methylzymosterol + 6 Fe(II)-[cytochrome b5] + 3 O2 + 5 H(+) = 4alpha-carboxyzymosterol + 6 Fe(III)-[cytochrome b5] + 4 H2O. The enzyme catalyses 4alpha-methyl-5alpha-cholest-7-en-3beta-ol + 6 Fe(II)-[cytochrome b5] + 3 O2 + 5 H(+) = 4alpha-carboxy-5alpha-cholest-7-en-3beta-ol + 6 Fe(III)-[cytochrome b5] + 4 H2O. It carries out the reaction 4,4-dimethyl-5alpha-cholest-8-en-3beta-ol + 6 Fe(II)-[cytochrome b5] + 3 O2 + 5 H(+) = 4alpha-carboxy-4beta-methyl-5alpha-cholest-8-en-3beta-ol + 6 Fe(III)-[cytochrome b5] + 4 H2O. The catalysed reaction is 4alpha-methyl-5alpha-cholest-8-en-3beta-ol + 6 Fe(II)-[cytochrome b5] + 3 O2 + 5 H(+) = 4alpha-carboxy-5alpha-cholest-8-ene-3beta-ol + 6 Fe(III)-[cytochrome b5] + 4 H2O. It participates in steroid biosynthesis; zymosterol biosynthesis; zymosterol from lanosterol: step 3/6. It functions in the pathway steroid biosynthesis; cholesterol biosynthesis. In terms of biological role, catalyzes the three-step monooxygenation required for the demethylation of 4,4-dimethyl and 4alpha-methylsterols, which can be subsequently metabolized to cholesterol. The chain is Methylsterol monooxygenase 1 (MSMO1) from Pongo abelii (Sumatran orangutan).